Here is a 335-residue protein sequence, read N- to C-terminus: Large ribosomal subunit protein uL3 (335 aa).

Residues 1–20 (MATIHRPRRGSLAFSPRKRA) are disordered.

It belongs to the universal ribosomal protein uL3 family. Part of the 50S ribosomal subunit. Forms a cluster with proteins L14 and L24e.

Functionally, one of the primary rRNA binding proteins, it binds directly near the 3'-end of the 23S rRNA, where it nucleates assembly of the 50S subunit. This Methanothrix thermoacetophila (strain DSM 6194 / JCM 14653 / NBRC 101360 / PT) (Methanosaeta thermophila) protein is Large ribosomal subunit protein uL3.